Reading from the N-terminus, the 163-residue chain is Neurotrophin-3 (163 aa).

The N-terminal stretch at 1 to 3 (IQS) is a signal peptide. Positions 4–119 (TSMDQGILTE…VLNRTSRRKR (116 aa)) are excised as a propeptide. Residue Asn-112 is glycosylated (N-linked (GlcNAc...) asparagine).

This sequence belongs to the NGF-beta family.

Its subcellular location is the secreted. Seems to promote the survival of visceral and proprioceptive sensory neurons. The polypeptide is Neurotrophin-3 (NTF3) (Chilabothrus striatus (Haitian boa constrictor)).